We begin with the raw amino-acid sequence, 469 residues long: Glutamate--tRNA ligase (469 aa).

Residues 12-22 carry the 'HIGH' region motif; sequence PSPTGFIHLGN. A 'KMSKS' region motif is present at residues 244–248; sequence KMSKR. Residue Lys-247 participates in ATP binding.

The protein belongs to the class-I aminoacyl-tRNA synthetase family. Glutamate--tRNA ligase type 1 subfamily. Monomer.

It is found in the cytoplasm. The enzyme catalyses tRNA(Glu) + L-glutamate + ATP = L-glutamyl-tRNA(Glu) + AMP + diphosphate. In terms of biological role, catalyzes the attachment of glutamate to tRNA(Glu) in a two-step reaction: glutamate is first activated by ATP to form Glu-AMP and then transferred to the acceptor end of tRNA(Glu). The polypeptide is Glutamate--tRNA ligase (Acidovorax sp. (strain JS42)).